Consider the following 497-residue polypeptide: Probable cytosol aminopeptidase (497 aa).

Mn(2+) contacts are provided by Lys263 and Asp268. The active site involves Lys275. Asp286, Asp345, and Glu347 together coordinate Mn(2+). The active site involves Arg349.

It belongs to the peptidase M17 family. Mn(2+) is required as a cofactor.

Its subcellular location is the cytoplasm. It carries out the reaction Release of an N-terminal amino acid, Xaa-|-Yaa-, in which Xaa is preferably Leu, but may be other amino acids including Pro although not Arg or Lys, and Yaa may be Pro. Amino acid amides and methyl esters are also readily hydrolyzed, but rates on arylamides are exceedingly low.. It catalyses the reaction Release of an N-terminal amino acid, preferentially leucine, but not glutamic or aspartic acids.. Functionally, presumably involved in the processing and regular turnover of intracellular proteins. Catalyzes the removal of unsubstituted N-terminal amino acids from various peptides. The chain is Probable cytosol aminopeptidase from Rhizobium meliloti (strain 1021) (Ensifer meliloti).